We begin with the raw amino-acid sequence, 518 residues long: Dihydro-ML-236C monooxygenase mlcC (518 aa).

Over 1-31 the chain is Cytoplasmic; sequence MLGQVLLTVESYQWVSTPQALVAVAVLLSLI. A helical; Signal-anchor for type II membrane protein membrane pass occupies residues 32–48; the sequence is AYRLRGRQSELQVYNPK. At 49–518 the chain is on the lumenal side; the sequence is KWWELTTMRA…EDIPLPHDRC (470 aa). Residue C454 participates in heme binding.

This sequence belongs to the cytochrome P450 family. Heme is required as a cofactor.

It is found in the endoplasmic reticulum membrane. It catalyses the reaction dihydro-ML-236C carboxylate + reduced [NADPH--hemoprotein reductase] + O2 = ML-236C carboxylate + oxidized [NADPH--hemoprotein reductase] + 2 H2O + H(+). The enzyme catalyses ML-236C carboxylate + reduced [NADPH--hemoprotein reductase] + O2 = ML-236A carboxylate + oxidized [NADPH--hemoprotein reductase] + H2O + H(+). Its pathway is polyketide biosynthesis. Dihydro-ML-236C carboxylate monooxygenase; part of the gene cluster that mediates the biosynthesis of compactin, also known as mevastatin or ML-236B, and which acts as a potent competitive inhibitor of HMG-CoA reductase. Compactin biosynthesis is performed in two stages. The first stage is catalyzed by the nonaketide synthase mlcA, which belongs to type I polyketide synthases and catalyzes the iterative nine-step formation of the polyketide. This PKS stage is completed by the action of dehydrogenase mlcG, which catalyzes the NADPH-dependent reduction of the unsaturated tetra-, penta- and heptaketide intermediates that arise during the mlcA-mediated biosynthesis of the nonaketide chain and leads to dihydro-ML-236C carboxylate. Covalently bound dihydro-ML-236C carboxylate is released from mlcA by the mlcF esterase. Conversion of dihydro-ML-236C carboxylate into ML-236A carboxylate is subsequently performed with the participation of molecular oxygen and P450 monoogygenase mlcC. Finally, mlcH performs the conversion of ML-236A carboxylate to ML-236B/compactin carboxylate through the addition of the side-chain diketide moiety produced by the diketide synthase mlcB. This chain is Dihydro-ML-236C monooxygenase mlcC, found in Penicillium citrinum.